Here is a 959-residue protein sequence, read N- to C-terminus: DEAD-box ATP-dependent RNA helicase rde-12 (959 aa).

The disordered stretch occupies residues 1 to 336; sequence MSSFGNNAGG…EGVNAPVRAP (336 aa). Basic and acidic residues predominate over residues 71–97; it reads GRREDDRSHSRDNHGGSRYGERDDRGN. Residues 98–118 show a composition bias toward polar residues; sequence NGRSADNRYSQSNYNYDSNRG. The span at 122–134 shows a compositional bias: basic and acidic residues; sequence YQRDNHGSKDDRG. Residues 137–160 are compositionally biased toward polar residues; sequence NQYNDHGSNHNSNSRNDQYRQGSY. Basic and acidic residues-rich tracts occupy residues 166-181 and 189-201; these read SGYR…DNDQ and RDSD…DHHN. A compositionally biased stretch (polar residues) spans 202–213; it reads YNSQSSPRSHQG. 2 stretches are compositionally biased toward basic and acidic residues: residues 219–239 and 255–270; these read SAPK…HDSY and YRND…DHRS. Low complexity predominate over residues 271–280; it reads GGNNSSSGFK. Positions 281–301 are enriched in gly residues; sequence NDGGFGGNDNRGFGNNGGGSF. Over residues 302-317 the composition is skewed to low complexity; it reads GNPNNSYRGNSNNIGG. A Q motif motif is present at residues 380-408; the sequence is TSWTNSGLHPTILETLKRIKYNNVRTIQG. Residues 411-599 enclose the Helicase ATP-binding domain; it reads IPQVLDGHDV…NELMKRLPGQ (189 aa). An ATP-binding site is contributed by 424–431; sequence AETSAGKT. The short motif at 539 to 542 is the DEAD box element; it reads DEAD. A Helicase C-terminal domain is found at 632 to 792; sequence KLREILKQNV…KVPDFLDAMA (161 aa). Disordered regions lie at residues 793–834 and 858–959; these read KSSR…GGGR and GGGG…DDEW. Gly residues-rich tracts occupy residues 800 to 834 and 858 to 872; these read GTSG…GGGR and GGGG…GFGG. A compositionally biased stretch (polar residues) spans 930–941; it reads TLGSSTFGTANN. Positions 942–959 are enriched in acidic residues; that stretch reads ADEEPTETGADGNDDDEW.

Belongs to the DEAD box helicase family. DDX3/DED1 subfamily. In terms of assembly, interacts with wago-1, ergo-1 and rde-1. Mg(2+) is required as a cofactor. In terms of tissue distribution, expressed in the soma and germline.

It localises to the cytoplasm. It is found in the perinuclear region. The protein localises to the cytoplasmic granule. Its subcellular location is the P-body. It carries out the reaction ATP + H2O = ADP + phosphate + H(+). In terms of biological role, probable ATP-dependent RNA helicase involved in RNAi-mediated gene silencing. Specifically required in the endogenous siRNA pathway for biogenesis of secondary endogenous small interfering RNA (siRNA) intermediates called 22G-RNAs. May associate with and recruit rde-10 to primary siRNA-targeted mRNA for secondary siRNA synthesis. May be recruited to target mRNAs by rde-1 and/or ergo-1. The protein is DEAD-box ATP-dependent RNA helicase rde-12 of Caenorhabditis elegans.